The sequence spans 650 residues: Pentatricopeptide repeat-containing protein At2g41080 (650 aa).

PPR repeat units follow at residues 43-77 (NTSL…GFSS), 78-112 (DKFI…NYMS), 114-139 (NILI…MPDR), 140-174 (KLTT…GFSP), 175-209 (DEYT…GLEL), 210-240 (DLVV…MPVR), 241-275 (NLVA…GCRP), 276-310 (NKIT…GASS), 311-341 (VVAV…REDE), 342-372 (DEVM…MAEQ), 378-413 (NEVA…GFKP), and 414-444 (GLKH…MPIK). The tract at residues 449-524 (IWKTLLSACN…EAGISWFEHK (76 aa)) is type E motif. The interval 525 to 555 (GEVHQFKMGDRSQSKSKEIYSYLKELTLEMK) is type E(+) motif. The type DYW motif stretch occupies residues 556 to 650 (LKGYKPDTAS…NGKCSCGDYW (95 aa)).

It belongs to the PPR family. PCMP-H subfamily.

In Arabidopsis thaliana (Mouse-ear cress), this protein is Pentatricopeptide repeat-containing protein At2g41080 (PCMP-H29).